Consider the following 253-residue polypeptide: 5-oxoprolinase subunit A (253 aa).

It belongs to the LamB/PxpA family. In terms of assembly, forms a complex composed of PxpA, PxpB and PxpC.

It catalyses the reaction 5-oxo-L-proline + ATP + 2 H2O = L-glutamate + ADP + phosphate + H(+). In terms of biological role, catalyzes the cleavage of 5-oxoproline to form L-glutamate coupled to the hydrolysis of ATP to ADP and inorganic phosphate. The polypeptide is 5-oxoprolinase subunit A (Bacillus cereus (strain AH820)).